A 380-amino-acid polypeptide reads, in one-letter code: MKVDYYEILGVTRECDDKKLKSAFRKLAMQYHPDRNAGDKEAERRFKEIGEAYEVLKDPQKRAAYDRFGHAAFENNNQGGGNPFGGFAAGGFSDIFEDFFGEIMGGGHRKRSDGRERGADLSYNMEVTLEEAFSGKTAQINIPSSIVCDSCEGSGAKKGSKPQICGTCHGAGRVRAAQGFFSIERTCHACNGRGEVITDPCPKCQGTRRVEKNRSLSVNIPAGIEDGTRIRLSGEGDAGIRGGPNGDLYIFLSVKPHEFFQREGADLHCRIPLSMVTAALGGEFEVSDLDGIKARVKIPEGTQNGRQFRLKGKGMPMLRRQQVRGDLYIHITIETPQKLTQEQRELLQKFEKLSNHENSPQSHGFFSRMKEFFENISGQN.

The J domain occupies 4–69; sequence DYYEILGVTR…QKRAAYDRFG (66 aa). The CR-type zinc finger occupies 135–213; it reads GKTAQINIPS…CQGTRRVEKN (79 aa). Zn(2+) is bound by residues Cys-148, Cys-151, Cys-165, Cys-168, Cys-187, Cys-190, Cys-201, and Cys-204. 4 CXXCXGXG motif repeats span residues 148–155, 165–172, 187–194, and 201–208; these read CDSCEGSG, CGTCHGAG, CHACNGRG, and CPKCQGTR.

It belongs to the DnaJ family. In terms of assembly, homodimer. Zn(2+) is required as a cofactor.

It localises to the cytoplasm. Its function is as follows. Participates actively in the response to hyperosmotic and heat shock by preventing the aggregation of stress-denatured proteins and by disaggregating proteins, also in an autonomous, DnaK-independent fashion. Unfolded proteins bind initially to DnaJ; upon interaction with the DnaJ-bound protein, DnaK hydrolyzes its bound ATP, resulting in the formation of a stable complex. GrpE releases ADP from DnaK; ATP binding to DnaK triggers the release of the substrate protein, thus completing the reaction cycle. Several rounds of ATP-dependent interactions between DnaJ, DnaK and GrpE are required for fully efficient folding. Also involved, together with DnaK and GrpE, in the DNA replication of plasmids through activation of initiation proteins. The polypeptide is Chaperone protein DnaJ (Bartonella quintana (strain Toulouse) (Rochalimaea quintana)).